A 137-amino-acid polypeptide reads, in one-letter code: AVCVSLLGASSIRPLPLHLGQFNNMIKCTIPGSTPWWDFSDYGCYCGYGGSGTPVDQLDRCCQTHDNCYTEAQKFSGCSPYTRKYSYECSEGTLTCKSDNDECAAFVCNCDRSAAICFARAPYNSNNVDIDLEAHCQ.

The first 17 residues, 1 to 17 (AVCVSLLGASSIRPLPL), serve as a signal peptide directing secretion. 7 disulfide bridges follow: C28-C89, C44-C136, C46-C62, C61-C117, C68-C110, C78-C103, and C96-C108. Ca(2+) is bound by residues Y45, G47, and G49. H65 is a catalytic residue. Position 66 (D66) interacts with Ca(2+). The active site involves D111.

Ca(2+) serves as cofactor. As to expression, expressed by the venom gland.

It is found in the secreted. It catalyses the reaction a 1,2-diacyl-sn-glycero-3-phosphocholine + H2O = a 1-acyl-sn-glycero-3-phosphocholine + a fatty acid + H(+). Snake venom phospholipase A2 (PLA2) that may act in the hemostasis system of the prey. Exhibits hydrolytic activities, and prefers the anionic micelles (dPPC with deoxycholate) (793 umol/mg/min) to the zwitterionic micelles (dPPC with Triton X-100) (591 umol/mg/min). PLA2 catalyzes the calcium-dependent hydrolysis of the 2-acyl groups in 3-sn-phosphoglycerides. The polypeptide is Acidic phospholipase A2 PL-I (Walterinnesia aegyptia (Desert black snake)).